Here is a 101-residue protein sequence, read N- to C-terminus: MIPGEIIAASGDIELNVGAPTVTLEVSNTGDRPVQVGSHYHFAETNGGLSFDRDKARGMRLDIPAGTAVRFEPGQTRSVTLIPLSGKREVYGFRQQVMGKL.

The protein belongs to the urease beta subunit family. Heterotrimer of UreA (gamma), UreB (beta) and UreC (alpha) subunits. Three heterotrimers associate to form the active enzyme.

Its subcellular location is the cytoplasm. The enzyme catalyses urea + 2 H2O + H(+) = hydrogencarbonate + 2 NH4(+). The protein operates within nitrogen metabolism; urea degradation; CO(2) and NH(3) from urea (urease route): step 1/1. This chain is Urease subunit beta, found in Rhizobium rhizogenes (strain K84 / ATCC BAA-868) (Agrobacterium radiobacter).